Here is a 189-residue protein sequence, read N- to C-terminus: UPF0149 protein VF_2102 (189 aa).

It belongs to the UPF0149 family.

This Aliivibrio fischeri (strain ATCC 700601 / ES114) (Vibrio fischeri) protein is UPF0149 protein VF_2102.